The following is a 300-amino-acid chain: Succinate--CoA ligase [ADP-forming] subunit alpha (300 aa).

Residues 17–20 (TGST), Lys43, and 96–98 (ITE) each bind CoA. Tyr159 contributes to the substrate binding site. The active-site Tele-phosphohistidine intermediate is the His247.

Belongs to the succinate/malate CoA ligase alpha subunit family. In terms of assembly, heterotetramer of two alpha and two beta subunits.

The catalysed reaction is succinate + ATP + CoA = succinyl-CoA + ADP + phosphate. It carries out the reaction GTP + succinate + CoA = succinyl-CoA + GDP + phosphate. It functions in the pathway carbohydrate metabolism; tricarboxylic acid cycle; succinate from succinyl-CoA (ligase route): step 1/1. Functionally, succinyl-CoA synthetase functions in the citric acid cycle (TCA), coupling the hydrolysis of succinyl-CoA to the synthesis of either ATP or GTP and thus represents the only step of substrate-level phosphorylation in the TCA. The alpha subunit of the enzyme binds the substrates coenzyme A and phosphate, while succinate binding and nucleotide specificity is provided by the beta subunit. The sequence is that of Succinate--CoA ligase [ADP-forming] subunit alpha from Bacillus subtilis (strain 168).